A 736-amino-acid polypeptide reads, in one-letter code: Probable methionine--tRNA ligase, cytoplasmic (736 aa).

Positions 25-35 match the 'HIGH' region motif; the sequence is PYVNNVPHLGN. Positions 346–350 match the 'KMSKS' region motif; the sequence is KFSKS. Residue Lys349 participates in ATP binding. The tRNA-binding domain occupies 573–680; sequence PEFPIDMKIA…QSIEAGSKIA (108 aa).

Belongs to the class-I aminoacyl-tRNA synthetase family.

The protein resides in the cytoplasm. The catalysed reaction is tRNA(Met) + L-methionine + ATP = L-methionyl-tRNA(Met) + AMP + diphosphate. This chain is Probable methionine--tRNA ligase, cytoplasmic (metS), found in Dictyostelium discoideum (Social amoeba).